We begin with the raw amino-acid sequence, 865 residues long: TATA box-binding protein-associated factor RNA polymerase I subunit B (865 aa).

The RRN7-type zinc finger occupies 1-33; the sequence is MHSAKNEKCNACGGYRFSVNDGFKYCDRCGALF. Zn(2+)-binding residues include cysteine 9, cysteine 12, cysteine 26, and cysteine 29. Residues 35–99 form a B-reader region; that stretch reads NFEELEEEEG…DFLQQQAIKG (65 aa). The B-linker stretch occupies residues 100 to 111; sequence EELELPHDATPD. The segment at 112 to 348 is N-terminal cyclin fold; the sequence is YLYRLALRLF…SQPERMKQGE (237 aa). The tract at residues 233–261 is disordered; that stretch reads DEDGDQDAQGGQQLDDLTLETTQNPDESI. The span at 239–248 shows a compositional bias: low complexity; sequence DAQGGQQLDD. The segment covering 252–261 has biased composition (polar residues); sequence ETTQNPDESI. The segment at 349–496 is C-terminal cyclin fold; it reads VVKPTIVDYA…LLTLRLTFQL (148 aa).

The protein belongs to the RRN7/TAF1B family.

Its subcellular location is the nucleus. The protein localises to the nucleolus. Functionally, component of RNA polymerase I core factor complex that acts as a GTF2B/TFIIB-like factor and plays a key role in multiple steps during transcription initiation such as pre-initiation complex (PIC) assembly and postpolymerase recruitment events in polymerase I (Pol I) transcription. Binds rDNA promoters and plays a role in Pol I recruitment. The polypeptide is TATA box-binding protein-associated factor RNA polymerase I subunit B (Caenorhabditis elegans).